Consider the following 212-residue polypeptide: Ion-translocating oxidoreductase complex subunit G (212 aa).

Residues 9 to 29 (ASLLGLFALLCTALVALVNQF) form a helical membrane-spanning segment. Thr176 is modified (FMN phosphoryl threonine).

Belongs to the RnfG family. As to quaternary structure, the complex is composed of six subunits: RnfA, RnfB, RnfC, RnfD, RnfE and RnfG. It depends on FMN as a cofactor.

Its subcellular location is the cell inner membrane. Functionally, part of a membrane-bound complex that couples electron transfer with translocation of ions across the membrane. In Shewanella loihica (strain ATCC BAA-1088 / PV-4), this protein is Ion-translocating oxidoreductase complex subunit G.